We begin with the raw amino-acid sequence, 522 residues long: Maturase K (522 aa).

It belongs to the intron maturase 2 family. MatK subfamily.

Its subcellular location is the plastid. The protein localises to the chloroplast. Functionally, usually encoded in the trnK tRNA gene intron. Probably assists in splicing its own and other chloroplast group II introns. In Gladiolus papilio (Goldblotch gladiolus), this protein is Maturase K.